Reading from the N-terminus, the 178-residue chain is Putative pre-16S rRNA nuclease (178 aa).

Composition is skewed to basic and acidic residues over residues 1–18 (MDHA…DPGR) and 50–60 (PRSKDRGPDAP). Disordered regions lie at residues 1–23 (MDHA…RRIG) and 36–60 (SDPD…PDAP).

It belongs to the YqgF nuclease family.

It is found in the cytoplasm. Could be a nuclease involved in processing of the 5'-end of pre-16S rRNA. The protein is Putative pre-16S rRNA nuclease of Rhodococcus opacus (strain B4).